The sequence spans 243 residues: MADLLLGVNIDHIATLRNARGTIYPDPVQAAFIAEQAGADGITVHLREDRRHITDRDVRILRQTIQTRMNLEMAVTDEMVDIACDIKPHFCCLVPEKRQEVTTEGGLDVAGQVDKMTLVVGRLADVGILVSLFIDADFRQIDAAVAAGAPYIEIHTGAYADASTVLERQAELMRIAKAATYAAGKGLKVNAGHGLTYHNVQPIAALPEMHELNIGHAIIGQAVMTGLATAVTDMKVLMREARR.

Position 9 (Asn-9) interacts with 3-amino-2-oxopropyl phosphate. 11-12 (DH) provides a ligand contact to 1-deoxy-D-xylulose 5-phosphate. Arg-20 lines the 3-amino-2-oxopropyl phosphate pocket. Catalysis depends on His-45, which acts as the Proton acceptor. The 1-deoxy-D-xylulose 5-phosphate site is built by Arg-47 and His-52. Glu-72 (proton acceptor) is an active-site residue. Residue Thr-102 coordinates 1-deoxy-D-xylulose 5-phosphate. The active-site Proton donor is His-193. 3-amino-2-oxopropyl phosphate-binding positions include Gly-194 and 215-216 (GH).

This sequence belongs to the PNP synthase family. Homooctamer; tetramer of dimers.

The protein localises to the cytoplasm. The catalysed reaction is 3-amino-2-oxopropyl phosphate + 1-deoxy-D-xylulose 5-phosphate = pyridoxine 5'-phosphate + phosphate + 2 H2O + H(+). It participates in cofactor biosynthesis; pyridoxine 5'-phosphate biosynthesis; pyridoxine 5'-phosphate from D-erythrose 4-phosphate: step 5/5. Its function is as follows. Catalyzes the complicated ring closure reaction between the two acyclic compounds 1-deoxy-D-xylulose-5-phosphate (DXP) and 3-amino-2-oxopropyl phosphate (1-amino-acetone-3-phosphate or AAP) to form pyridoxine 5'-phosphate (PNP) and inorganic phosphate. This Yersinia pseudotuberculosis serotype I (strain IP32953) protein is Pyridoxine 5'-phosphate synthase.